Here is a 248-residue protein sequence, read N- to C-terminus: Probable transcriptional regulatory protein PFL_4766 (248 aa).

Belongs to the TACO1 family.

Its subcellular location is the cytoplasm. This chain is Probable transcriptional regulatory protein PFL_4766, found in Pseudomonas fluorescens (strain ATCC BAA-477 / NRRL B-23932 / Pf-5).